Here is a 153-residue protein sequence, read N- to C-terminus: MKLNTIKPGIGSAKPKRRVGRGIGSGLGKTCGRGHKGQKSRAGGFHKVGFEGGQMPLQRRLPKRGFTVYGKKQVREIKLSTLQLIDLSEFNPSVLYDHGLIKNINDPVKIILGNQLIKRAIKIKDLIISRGAKEAVEQMGGLVELTVKDVNGV.

The disordered stretch occupies residues 1–42; the sequence is MKLNTIKPGIGSAKPKRRVGRGIGSGLGKTCGRGHKGQKSRA. The span at 21–31 shows a compositional bias: gly residues; sequence RGIGSGLGKTC.

This sequence belongs to the universal ribosomal protein uL15 family. In terms of assembly, part of the 50S ribosomal subunit.

In terms of biological role, binds to the 23S rRNA. This chain is Large ribosomal subunit protein uL15, found in Nitrosomonas europaea (strain ATCC 19718 / CIP 103999 / KCTC 2705 / NBRC 14298).